The following is a 583-amino-acid chain: Undecaprenyl phosphate-alpha-4-amino-4-deoxy-L-arabinose arabinosyl transferase 2 (583 aa).

The disordered stretch occupies residues 1–20 (MTSRIQMHRTSPPPAYGTSA). The next 12 membrane-spanning stretches (helical) occupy residues 42-62 (LLLV…GLWI), 113-135 (LFGV…YLIT), 145-165 (SFAA…AGYS), 166-186 (NLDP…WFAL), 209-229 (FMTK…PYMI), 241-261 (GLVA…SIHA), 290-310 (WWFY…LLPG), 321-341 (QAPT…FSLS), 345-365 (LPTY…SALI), 380-400 (SLLN…IQLT), 409-429 (MLGL…NLLP), and 440-460 (PALG…GFIV).

This sequence belongs to the glycosyltransferase 83 family.

Its subcellular location is the cell inner membrane. It carries out the reaction 4-amino-4-deoxy-alpha-L-arabinopyranosyl di-trans,octa-cis-undecaprenyl phosphate + lipid IVA = lipid IIA + di-trans,octa-cis-undecaprenyl phosphate.. It participates in lipopolysaccharide metabolism; 4-amino-4-deoxy-beta-L-arabinose-lipid A biosynthesis. Its function is as follows. Catalyzes the transfer of the L-Ara4N moiety of the glycolipid undecaprenyl phosphate-alpha-L-Ara4N to lipid A. The modified arabinose is attached to lipid A and is required for resistance to polymyxin and cationic antimicrobial peptides. This chain is Undecaprenyl phosphate-alpha-4-amino-4-deoxy-L-arabinose arabinosyl transferase 2, found in Pseudomonas fluorescens (strain ATCC BAA-477 / NRRL B-23932 / Pf-5).